We begin with the raw amino-acid sequence, 505 residues long: OVARIAN TUMOR DOMAIN-containing deubiquitinating enzyme 6 (505 aa).

A disordered region spans residues 1–191 (MTRILVQRGS…NSSDEHMPCY (191 aa)). The span at 9 to 30 (GSSGSSSNSSRPSSSSSSSSGS) shows a compositional bias: low complexity. The span at 51–72 (DEKQEEVTVVEKAECSDAKDVA) shows a compositional bias: basic and acidic residues. The span at 73–86 (VDSDEPADREDDEG) shows a compositional bias: acidic residues. Pro residues predominate over residues 115 to 124 (PPVPAPPPKP). Over residues 159–173 (SSRSSPTGSHPSSPR) the composition is skewed to low complexity. Positions 174–188 (SHSENEGYNSSDEHM) are enriched in basic and acidic residues. In terms of domain architecture, OTU spans 216–339 (FEIRRMLEDG…GNHYNSLVDP (124 aa)). Residue Asp224 is part of the active site. Cys227 functions as the Nucleophile in the catalytic mechanism. The active site involves His332. The disordered stretch occupies residues 416-447 (RIGPKESSTSNAETSSSGARPSGSDSKPAEAV). Residues 421–441 (ESSTSNAETSSSGARPSGSDS) show a composition bias toward low complexity. Residues 446–491 (AVKEKTVLSSSIEMVLSMGFSYAQAMEAYSIFGDDVDSMVCYVLET) form the UBA domain.

Belongs to the peptidase C85 family. In terms of assembly, interacts with KDM1C. Mostly expressed in stems flowers and siliques, and, to a lower extent, in leaves, roots and seedlings.

The protein localises to the nucleus. The protein resides in the cytoplasm. It catalyses the reaction Thiol-dependent hydrolysis of ester, thioester, amide, peptide and isopeptide bonds formed by the C-terminal Gly of ubiquitin (a 76-residue protein attached to proteins as an intracellular targeting signal).. Hydrolase that can remove conjugated ubiquitin from proteins in vitro and may therefore play an important regulatory role at the level of protein turnover by preventing degradation. Binds chromatin (e.g. nucleosomes and histones) and has enzymatic histone deubiquitinase activity, specific for the H2B histone. Can both repress (e.g. OSR2) and promote (e.g. AN3) the expression of target genes by associating with chromatin, deubiquitinating H2B and regulating its euchromatic histone marks (e.g. H3ac and H3K4me). In association with LDL1/KDM1C, involved in transcriptional gene repression via histone deubiquitination and demethylation. Promotes the concerted epigenetic regulation and repression (e.g. the removal of euchromatic histone acetylation, ubiquitination, and methylation marks) of a set of genes (e.g. GA20OX, WUS, OSR2, ARL and ABI5) that collectively limit plant growth thus stimulating plant growth and increasing cell size. This chain is OVARIAN TUMOR DOMAIN-containing deubiquitinating enzyme 6, found in Arabidopsis thaliana (Mouse-ear cress).